A 1415-amino-acid polypeptide reads, in one-letter code: DNA-directed RNA polymerase subunit beta'' (1415 aa).

Zn(2+) is bound by residues Cys217, Cys291, Cys298, and Cys301.

This sequence belongs to the RNA polymerase beta' chain family. RpoC2 subfamily. In terms of assembly, in plastids the minimal PEP RNA polymerase catalytic core is composed of four subunits: alpha, beta, beta', and beta''. When a (nuclear-encoded) sigma factor is associated with the core the holoenzyme is formed, which can initiate transcription. Zn(2+) serves as cofactor.

It localises to the plastid. The protein resides in the chloroplast. The enzyme catalyses RNA(n) + a ribonucleoside 5'-triphosphate = RNA(n+1) + diphosphate. Functionally, DNA-dependent RNA polymerase catalyzes the transcription of DNA into RNA using the four ribonucleoside triphosphates as substrates. In Phaeodactylum tricornutum (strain CCAP 1055/1), this protein is DNA-directed RNA polymerase subunit beta''.